Consider the following 303-residue polypeptide: MKRVVLFLLTNLAVIAVLSITARILGVDRFLTANGLNMGMLLAFAALIGFGGAFISLLMSKTMAKWSTRARVIERPGNQDEAWLVDTVRQLSKKAGLPMPEVAIFDGAPNAFATGASKSKSLVAVSTGLLQSMDRKQVAAVLAHEVAHVENGDMVTLTLIQGVVNTFVIFLSRALGYLVDNFLRGDNEESTGPGIGYWISSIAFEIVFGVLASIVVMYFSRKREFRADAGAAKLMGDRRPMIDALRTLGGLQAGQLPKEMAASGIAGGGMMALFSSHPPLESRIAALESATPPSTPTPSRRGS.

2 consecutive transmembrane segments (helical) span residues 4–24 (VVLFLLTNLAVIAVLSITARI) and 38–58 (MGMLLAFAALIGFGGAFISLL). Residue H144 coordinates Zn(2+). Residue E145 is part of the active site. H148 serves as a coordination point for Zn(2+). The next 2 helical transmembrane spans lie at 152-172 (GDMVTLTLIQGVVNTFVIFLS) and 199-219 (ISSIAFEIVFGVLASIVVMYF). Zn(2+) is bound at residue E224.

This sequence belongs to the peptidase M48B family. Requires Zn(2+) as cofactor.

Its subcellular location is the cell inner membrane. The sequence is that of Protease HtpX homolog from Chlorobium phaeobacteroides (strain BS1).